A 98-amino-acid polypeptide reads, in one-letter code: Integration host factor subunit beta (98 aa).

It belongs to the bacterial histone-like protein family. As to quaternary structure, heterodimer of an alpha and a beta chain.

This protein is one of the two subunits of integration host factor, a specific DNA-binding protein that functions in genetic recombination as well as in transcriptional and translational control. This is Integration host factor subunit beta from Gluconacetobacter diazotrophicus (strain ATCC 49037 / DSM 5601 / CCUG 37298 / CIP 103539 / LMG 7603 / PAl5).